A 397-amino-acid polypeptide reads, in one-letter code: Acetate kinase (397 aa).

Residue N8 participates in Mg(2+) binding. Residue K15 participates in ATP binding. R89 lines the substrate pocket. The active-site Proton donor/acceptor is the D146. Residues 206–210, 281–283, and 329–333 contribute to the ATP site; these read HLGNG, DLR, and GVGEN. E382 is a binding site for Mg(2+).

It belongs to the acetokinase family. Homodimer. Mg(2+) is required as a cofactor. Requires Mn(2+) as cofactor.

It localises to the cytoplasm. The enzyme catalyses acetate + ATP = acetyl phosphate + ADP. It participates in metabolic intermediate biosynthesis; acetyl-CoA biosynthesis; acetyl-CoA from acetate: step 1/2. Catalyzes the formation of acetyl phosphate from acetate and ATP. Can also catalyze the reverse reaction. The chain is Acetate kinase from Bacillus anthracis.